Consider the following 246-residue polypeptide: MVWRFQKHIGKGSSQERPIRKDFLTGTAGRDGDRGWGKWWGTALNFPKDPKGSAEGSAPTPLTEGSLPTVGNAPETQPTRRRGAGQRHCNQKPKAGRHFQTLGQPLVGTPPSPQDAAPRQGSPGPGPARTTAVWRPAPSGAAAEHGQKPQTPSASLQPPFPPPPPPGDPTPPSPLPPAHVPPTLLTLQEPVTGEGTSFRVEGLCASRLAVGRGLGALAANTSAPAAGSPLAAAAAAAAAVSSSKFP.

Basic residues-rich tracts occupy residues 1–10 (MVWRFQKHIG) and 79–97 (TRRR…KAGR). The interval 1–184 (MVWRFQKHIG…LPPAHVPPTL (184 aa)) is disordered. Positions 158 to 180 (PPFPPPPPPGDPTPPSPLPPAHV) are enriched in pro residues.

This is an uncharacterized protein from Homo sapiens (Human).